A 317-amino-acid polypeptide reads, in one-letter code: UV DNA damage endonuclease (317 aa).

The protein belongs to the uve1/UvsE family.

Its function is as follows. Component in a DNA repair pathway. Removal of UV LIGHT damaged nucleotides. Recognizes pyrimidine dimers and cleave a phosphodiester bond immediately 5' to the lesion. This chain is UV DNA damage endonuclease, found in Bacillus cereus (strain B4264).